The sequence spans 162 residues: 2-C-methyl-D-erythritol 2,4-cyclodiphosphate synthase (162 aa).

Residues Asp10 and His12 each contribute to the a divalent metal cation site. 4-CDP-2-C-methyl-D-erythritol 2-phosphate contacts are provided by residues 10–12 and 36–37; these read DVH and HS. His44 contributes to the a divalent metal cation binding site. 4-CDP-2-C-methyl-D-erythritol 2-phosphate is bound by residues 58–60, 63–67, 102–108, 134–137, Phe141, and Arg144; these read DIG, FPDTD, AQAPKMA, and TTTE.

The protein belongs to the IspF family. In terms of assembly, homotrimer. The cofactor is a divalent metal cation.

The enzyme catalyses 4-CDP-2-C-methyl-D-erythritol 2-phosphate = 2-C-methyl-D-erythritol 2,4-cyclic diphosphate + CMP. It functions in the pathway isoprenoid biosynthesis; isopentenyl diphosphate biosynthesis via DXP pathway; isopentenyl diphosphate from 1-deoxy-D-xylulose 5-phosphate: step 4/6. Its function is as follows. Involved in the biosynthesis of isopentenyl diphosphate (IPP) and dimethylallyl diphosphate (DMAPP), two major building blocks of isoprenoid compounds. Catalyzes the conversion of 4-diphosphocytidyl-2-C-methyl-D-erythritol 2-phosphate (CDP-ME2P) to 2-C-methyl-D-erythritol 2,4-cyclodiphosphate (ME-CPP) with a corresponding release of cytidine 5-monophosphate (CMP). This chain is 2-C-methyl-D-erythritol 2,4-cyclodiphosphate synthase, found in Pseudoalteromonas atlantica (strain T6c / ATCC BAA-1087).